The sequence spans 462 residues: Glycine--tRNA ligase (462 aa).

Residues arginine 98 and glutamate 174 each coordinate substrate. Residues arginine 206 to glutamate 208, phenylalanine 216 to phenylalanine 221, glutamate 290 to leucine 291, and glycine 334 to arginine 337 each bind ATP. Residue phenylalanine 221–glutamate 225 coordinates substrate. Residue glutamate 330–glycine 334 coordinates substrate.

Belongs to the class-II aminoacyl-tRNA synthetase family. In terms of assembly, homodimer.

The protein localises to the cytoplasm. The catalysed reaction is tRNA(Gly) + glycine + ATP = glycyl-tRNA(Gly) + AMP + diphosphate. Catalyzes the attachment of glycine to tRNA(Gly). The sequence is that of Glycine--tRNA ligase from Lachnospira eligens (strain ATCC 27750 / DSM 3376 / VPI C15-48 / C15-B4) (Eubacterium eligens).